A 324-amino-acid chain; its full sequence is Stomatin-like protein stl-1 (324 aa).

This sequence belongs to the band 7/mec-2 family. In terms of tissue distribution, widely expressed in most tissues, including body wall muscles, intestinal epithelia, and pharynx and head neurons.

The protein resides in the mitochondrion. In terms of biological role, mitochondrial protein that probably regulates the biogenesis and the activity of mitochondria. In neurons, involved in mitochondrial fusion and recovery of normal locomotory behavior during reoxygenation; probably acts independently of egl-9 and the canonical hypoxia response pathway. In Caenorhabditis elegans, this protein is Stomatin-like protein stl-1.